The chain runs to 102 residues: Small ribosomal subunit protein uS10 (102 aa).

It belongs to the universal ribosomal protein uS10 family. In terms of assembly, part of the 30S ribosomal subunit.

In terms of biological role, involved in the binding of tRNA to the ribosomes. The polypeptide is Small ribosomal subunit protein uS10 (Agrobacterium fabrum (strain C58 / ATCC 33970) (Agrobacterium tumefaciens (strain C58))).